Consider the following 126-residue polypeptide: Protein ApaG (126 aa).

Residues 2 to 126 (SALDNSIRVE…FRLATPGLLH (125 aa)) form the ApaG domain.

The polypeptide is Protein ApaG (Shewanella oneidensis (strain ATCC 700550 / JCM 31522 / CIP 106686 / LMG 19005 / NCIMB 14063 / MR-1)).